A 316-amino-acid chain; its full sequence is Phosphoribosylaminoimidazole-succinocarboxamide synthase (316 aa).

Belongs to the SAICAR synthetase family.

The catalysed reaction is 5-amino-1-(5-phospho-D-ribosyl)imidazole-4-carboxylate + L-aspartate + ATP = (2S)-2-[5-amino-1-(5-phospho-beta-D-ribosyl)imidazole-4-carboxamido]succinate + ADP + phosphate + 2 H(+). It participates in purine metabolism; IMP biosynthesis via de novo pathway; 5-amino-1-(5-phospho-D-ribosyl)imidazole-4-carboxamide from 5-amino-1-(5-phospho-D-ribosyl)imidazole-4-carboxylate: step 1/2. In Flavobacterium psychrophilum (strain ATCC 49511 / DSM 21280 / CIP 103535 / JIP02/86), this protein is Phosphoribosylaminoimidazole-succinocarboxamide synthase.